The sequence spans 193 residues: Interferon lambda-2 (193 aa).

The first 19 residues, 1–19 (MLLLLLPLLLAAVLTRTQA), serve as a signal peptide directing secretion. An N-linked (GlcNAc...) asparagine glycan is attached at N105.

This sequence belongs to the lambda interferon family.

The protein resides in the secreted. Functionally, cytokine with antiviral, antitumour and immunomodulatory activities. Plays a critical role in the antiviral host defense, predominantly in the epithelial tissues. Acts as a ligand for the heterodimeric class II cytokine receptor composed of IL10RB and IFNLR1, and receptor engagement leads to the activation of the JAK/STAT signaling pathway resulting in the expression of IFN-stimulated genes (ISG), which mediate the antiviral state. Has a restricted receptor distribution and therefore restricted targets: is primarily active in epithelial cells and this cell type-selective action is because of the epithelial cell-specific expression of its receptor IFNLR1. Seems not to be essential for early virus-activated host defense in vaginal infection, but plays an important role in Toll-like receptor (TLR)-induced antiviral defense. Plays a significant role in the antiviral immune defense in the intestinal epithelium. Exerts an immunomodulatory effect by up-regulating MHC class I antigen expression. This is Interferon lambda-2 (Ifnl2) from Mus musculus (Mouse).